Consider the following 439-residue polypeptide: Tol-Pal system protein TolB (439 aa).

The first 22 residues, 1 to 22, serve as a signal peptide directing secretion; sequence MTKFPRWLAMLVGLLFPLSALT.

It belongs to the TolB family. In terms of assembly, the Tol-Pal system is composed of five core proteins: the inner membrane proteins TolA, TolQ and TolR, the periplasmic protein TolB and the outer membrane protein Pal. They form a network linking the inner and outer membranes and the peptidoglycan layer.

The protein localises to the periplasm. In terms of biological role, part of the Tol-Pal system, which plays a role in outer membrane invagination during cell division and is important for maintaining outer membrane integrity. In Xylella fastidiosa (strain Temecula1 / ATCC 700964), this protein is Tol-Pal system protein TolB.